The chain runs to 161 residues: Protein-export protein SecB (161 aa).

This sequence belongs to the SecB family. In terms of assembly, homotetramer, a dimer of dimers. One homotetramer interacts with 1 SecA dimer.

It is found in the cytoplasm. One of the proteins required for the normal export of preproteins out of the cell cytoplasm. It is a molecular chaperone that binds to a subset of precursor proteins, maintaining them in a translocation-competent state. It also specifically binds to its receptor SecA. The chain is Protein-export protein SecB from Shewanella sp. (strain ANA-3).